A 79-amino-acid chain; its full sequence is RNA-binding protein Hfq (79 aa).

The region spanning 9–69 is the Sm domain; that stretch reads DTFLNHLRKE…ISTFTPQRPV (61 aa).

This sequence belongs to the Hfq family. Homohexamer.

Its function is as follows. RNA chaperone that binds small regulatory RNA (sRNAs) and mRNAs to facilitate mRNA translational regulation in response to envelope stress, environmental stress and changes in metabolite concentrations. Also binds with high specificity to tRNAs. In Brevibacillus brevis (strain 47 / JCM 6285 / NBRC 100599), this protein is RNA-binding protein Hfq.